A 651-amino-acid polypeptide reads, in one-letter code: Carboxypeptidase S1 homolog A (651 aa).

The signal sequence occupies residues 1–19 (MHLATGLAVALPFIGAASA). A disulfide bridge links cysteine 50 with cysteine 121. N-linked (GlcNAc...) asparagine glycans are attached at residues asparagine 77, asparagine 125, asparagine 128, asparagine 161, asparagine 184, and asparagine 202. Serine 238 is a catalytic residue. N-linked (GlcNAc...) asparagine glycans are attached at residues asparagine 260, asparagine 299, asparagine 308, asparagine 347, and asparagine 410. Disulfide bonds link cysteine 325-cysteine 361 and cysteine 332-cysteine 354. Residue aspartate 458 is part of the active site. Position 461 (cysteine 461) interacts with substrate. 2 N-linked (GlcNAc...) asparagine glycosylation sites follow: asparagine 474 and asparagine 504. Histidine 515 is a catalytic residue. Glutamate 516 serves as a coordination point for substrate. A disordered region spans residues 604–630 (KSPAGKKQGPPPTSTSPPSPTSSSEGS). Residues 612–623 (GPPPTSTSPPSP) show a composition bias toward pro residues. Residue serine 625 is the site of GPI-anchor amidated serine attachment. Positions 626–651 (SSEGSVKEFSVSVLGVSVLAAITFFL) are cleaved as a propeptide — removed in mature form.

The protein belongs to the peptidase S10 family.

It localises to the cell membrane. The enzyme catalyses Preferential release of a C-terminal arginine or lysine residue.. Extracellular serine carboxypeptidase that contributes to pathogenicity. The sequence is that of Carboxypeptidase S1 homolog A (SCPA) from Arthroderma otae (strain ATCC MYA-4605 / CBS 113480) (Microsporum canis).